Reading from the N-terminus, the 142-residue chain is MPTPSMEDYIEQIYLLIDEKGYARVSDIAEALSVHPSSVTKMVQKLDKDEYLIYEKYRGLVLTSKGKKIGERLVYRHELLEQFMRIIGVDESKIYNDVEGIEHHLSWEAIDRIGDLVQYFEQDEVRVETLRGVQKANEEKSN.

The HTH dtxR-type domain occupies 1–63; it reads MPTPSMEDYI…YEKYRGLVLT (63 aa). Asp8, Glu11, His77, Glu99, Glu102, and His103 together coordinate Mn(2+).

This sequence belongs to the DtxR/MntR family. As to quaternary structure, homodimer.

It is found in the cytoplasm. Its activity is regulated as follows. DNA binding is strongly activated by Mn(2+). Functionally, central regulator of manganese homeostasis. The chain is HTH-type transcriptional regulator MntR from Bacillus cereus (strain AH820).